The primary structure comprises 101 residues: Small ribosomal subunit protein uS14 (101 aa).

It belongs to the universal ribosomal protein uS14 family. As to quaternary structure, part of the 30S ribosomal subunit. Contacts proteins S3 and S10.

Its function is as follows. Binds 16S rRNA, required for the assembly of 30S particles and may also be responsible for determining the conformation of the 16S rRNA at the A site. This is Small ribosomal subunit protein uS14 from Gluconacetobacter diazotrophicus (strain ATCC 49037 / DSM 5601 / CCUG 37298 / CIP 103539 / LMG 7603 / PAl5).